A 313-amino-acid chain; its full sequence is Protein FixB (313 aa).

FAD is bound at residue 255–283 (LYLAVGISGQIQHMVGANGAQTIFAINKD).

The protein belongs to the ETF alpha-subunit/FixB family. Heterodimer of FixA and FixB.

Its pathway is amine and polyamine metabolism; carnitine metabolism. Its function is as follows. Required for anaerobic carnitine reduction. May bring reductant to CaiA. In Salmonella agona (strain SL483), this protein is Protein FixB.